The primary structure comprises 617 residues: ATP-dependent RNA helicase DBP1 (617 aa).

The tract at residues 1 to 90 is disordered; the sequence is MADLPQKVSN…TSANYNRGGS (90 aa). Residues 7–17 are compositionally biased toward polar residues; the sequence is KVSNLSINNKE. A compositionally biased stretch (basic and acidic residues) spans 38-58; the sequence is PSFERSTPKQEDKVTGGDFFR. The segment covering 79–90 has biased composition (polar residues); sequence GGTSANYNRGGS. The Q motif motif lies at 154–182; the sequence is LDFSSPPLDELLMENIKLASFTKPTPVQK. A Helicase ATP-binding domain is found at 185–374; that stretch reads IPIVTKGRDL…RDFLDNYIFL (190 aa). 198–205 is a binding site for ATP; that stretch reads AQTGSGKT. Positions 318-321 match the DEAD box motif; the sequence is DEAD. In terms of domain architecture, Helicase C-terminal spans 385-545; that stretch reads NITQRILYVD…EVPTFLSDLS (161 aa). Residues 542 to 617 are disordered; the sequence is SDLSRQNSRG…GYGNSNASWW (76 aa). Positions 580-594 are enriched in polar residues; the sequence is FGSTRPRNTGTSNWG.

The protein belongs to the DEAD box helicase family. DDX3/DED1 subfamily.

It localises to the cytoplasm. The enzyme catalyses ATP + H2O = ADP + phosphate + H(+). In terms of biological role, ATP-binding RNA helicase involved in translation initiation. Remodels RNA in response to ADP and ATP concentrations by facilitating disruption, but also formation of RNA duplexes. Redundant to DED1, may be required in conditions in which DED1 expression is decreased. The polypeptide is ATP-dependent RNA helicase DBP1 (DBP1) (Saccharomyces cerevisiae (strain ATCC 204508 / S288c) (Baker's yeast)).